The chain runs to 1330 residues: Paired amphipathic helix protein Sin3-like 3 (1330 aa).

2 consecutive PAH domains span residues 8–78 (QKLT…LPKG) and 94–164 (KRVE…LPDT). Over residues 191–246 (IITPHPDHDYGTEHIDQDRERPIKKENKEHMRGTNKENEHRDARDFEPHSKKEQFL) the composition is skewed to basic and acidic residues. The disordered stretch occupies residues 191–281 (IITPHPDHDY…VPSSSTYDEK (91 aa)). The segment covering 262-277 (ISNQSKLSGAVPSSST) has biased composition (polar residues). The PAH 3 domain maps to 283-351 (AMKSYSQDLA…DSFIEFLVQC (69 aa)). 5 disordered regions span residues 373–401 (GEGK…DRDH), 718–775 (NQNV…GRTS), 789–808 (KNVV…SIER), 882–906 (QEMA…FEED), and 920–1002 (SKAN…EAEC). The span at 383-401 (DNDRDQEHKRDDGLRDRDH) shows a compositional bias: basic and acidic residues. The span at 723 to 734 (SGSSSAGESEGS) shows a compositional bias: low complexity. Basic and acidic residues predominate over residues 789-800 (KNVVTSDEKPES). Polar residues predominate over residues 920–932 (SKANDSTGNNISG). Composition is skewed to basic and acidic residues over residues 933-949 (DRSR…RAEN) and 956-968 (NAAR…RNEY). Residues 980 to 989 (GGEDPEDDLD) are compositionally biased toward acidic residues. Position 996 is a phosphoserine (S996).

In terms of assembly, interacts with ERF7 and the histone deacetylase HDA19.

The protein localises to the nucleus. Acts as a transcriptional repressor. Interacts with ERF7 to repress genes in abscisic acid and drought stress responses. The heterodimer represses transcription by tethering SNL3 to DNA. This Arabidopsis thaliana (Mouse-ear cress) protein is Paired amphipathic helix protein Sin3-like 3 (SNL3).